Consider the following 177-residue polypeptide: Shikimate kinase (177 aa).

Residue 17-22 (GVGKTT) coordinates ATP. Thr21 serves as a coordination point for Mg(2+). Substrate-binding residues include Asp39, Arg63, and Gly86. Arg125 lines the ATP pocket. A substrate-binding site is contributed by Arg143. Arg159 provides a ligand contact to ATP.

The protein belongs to the shikimate kinase family. As to quaternary structure, monomer. Mg(2+) serves as cofactor.

It is found in the cytoplasm. It catalyses the reaction shikimate + ATP = 3-phosphoshikimate + ADP + H(+). It participates in metabolic intermediate biosynthesis; chorismate biosynthesis; chorismate from D-erythrose 4-phosphate and phosphoenolpyruvate: step 5/7. In terms of biological role, catalyzes the specific phosphorylation of the 3-hydroxyl group of shikimic acid using ATP as a cosubstrate. The protein is Shikimate kinase of Bacillus licheniformis (strain ATCC 14580 / DSM 13 / JCM 2505 / CCUG 7422 / NBRC 12200 / NCIMB 9375 / NCTC 10341 / NRRL NRS-1264 / Gibson 46).